Reading from the N-terminus, the 398-residue chain is Succinate--CoA ligase [ADP-forming] subunit beta (398 aa).

In terms of domain architecture, ATP-grasp spans 9 to 254 (KRLLHEYGAP…LSEEDPKEIE (246 aa)). ATP is bound by residues Lys46, 53–55 (GRG), Glu109, Ala112, and Glu117. The Mg(2+) site is built by Asn209 and Asp223. Residues Asn274 and 331 to 333 (GIM) each bind substrate.

This sequence belongs to the succinate/malate CoA ligase beta subunit family. As to quaternary structure, heterotetramer of two alpha and two beta subunits. Requires Mg(2+) as cofactor.

The catalysed reaction is succinate + ATP + CoA = succinyl-CoA + ADP + phosphate. It carries out the reaction GTP + succinate + CoA = succinyl-CoA + GDP + phosphate. It functions in the pathway carbohydrate metabolism; tricarboxylic acid cycle; succinate from succinyl-CoA (ligase route): step 1/1. Succinyl-CoA synthetase functions in the citric acid cycle (TCA), coupling the hydrolysis of succinyl-CoA to the synthesis of either ATP or GTP and thus represents the only step of substrate-level phosphorylation in the TCA. The beta subunit provides nucleotide specificity of the enzyme and binds the substrate succinate, while the binding sites for coenzyme A and phosphate are found in the alpha subunit. The protein is Succinate--CoA ligase [ADP-forming] subunit beta of Bartonella quintana (strain Toulouse) (Rochalimaea quintana).